A 96-amino-acid chain; its full sequence is Large ribosomal subunit protein uL23 (96 aa).

The protein belongs to the universal ribosomal protein uL23 family. In terms of assembly, part of the 50S ribosomal subunit. Contacts protein L29, and trigger factor when it is bound to the ribosome.

Functionally, one of the early assembly proteins it binds 23S rRNA. One of the proteins that surrounds the polypeptide exit tunnel on the outside of the ribosome. Forms the main docking site for trigger factor binding to the ribosome. The chain is Large ribosomal subunit protein uL23 from Thermus thermophilus (strain ATCC BAA-163 / DSM 7039 / HB27).